A 270-amino-acid polypeptide reads, in one-letter code: Hemin import ATP-binding protein HmuV (270 aa).

The 237-residue stretch at leucine 2–threonine 238 folds into the ABC transporter domain. Glycine 34 to threonine 41 is an ATP binding site.

It belongs to the ABC transporter superfamily. Heme (hemin) importer (TC 3.A.1.14.5) family. As to quaternary structure, the complex is composed of two ATP-binding proteins (HmuV), two transmembrane proteins (HmuU) and a solute-binding protein (HmuT).

It localises to the cell inner membrane. In terms of biological role, part of the ABC transporter complex HmuTUV involved in hemin import. Responsible for energy coupling to the transport system. This Jannaschia sp. (strain CCS1) protein is Hemin import ATP-binding protein HmuV.